A 183-amino-acid polypeptide reads, in one-letter code: Adenine phosphoribosyltransferase (183 aa).

This sequence belongs to the purine/pyrimidine phosphoribosyltransferase family. Homodimer.

It is found in the cytoplasm. It carries out the reaction AMP + diphosphate = 5-phospho-alpha-D-ribose 1-diphosphate + adenine. The protein operates within purine metabolism; AMP biosynthesis via salvage pathway; AMP from adenine: step 1/1. Functionally, catalyzes a salvage reaction resulting in the formation of AMP, that is energically less costly than de novo synthesis. This chain is Adenine phosphoribosyltransferase, found in Proteus mirabilis (strain HI4320).